Reading from the N-terminus, the 164-residue chain is Protein LIGHT-DEPENDENT SHORT HYPOCOTYLS 8 (164 aa).

Residues R23–K150 enclose the ALOG domain. The short motif at K148 to L152 is the Nuclear localization signal element.

This sequence belongs to the plant homeotic and developmental regulators ALOG protein family.

Its subcellular location is the nucleus. In terms of biological role, probable transcription regulator that acts as a developmental regulator by promoting cell growth in response to light. In Arabidopsis thaliana (Mouse-ear cress), this protein is Protein LIGHT-DEPENDENT SHORT HYPOCOTYLS 8 (LSH8).